The following is a 280-amino-acid chain: Probable protein VP2 (280 aa).

2 disordered regions span residues 46 to 167 (LGAG…FFTS) and 200 to 280 (AQLS…TYSN). The span at 65–81 (PEGPGGPPQHAPPNPPP) shows a compositional bias: pro residues. Over residues 90-100 (RGGGAGGAGDG) the composition is skewed to gly residues. Acidic residues predominate over residues 106-117 (DAAEEYGPEDLD). Over residues 227-251 (AKTRRRVKKKPLSSKNKHTKKKKRS) the composition is skewed to basic residues. The span at 252-266 (YSSSSPSSKDNTSES) shows a compositional bias: low complexity.

Post-translationally, phosphorylated at C-terminal serines.

The polypeptide is Probable protein VP2 (Homo sapiens (Human)).